Reading from the N-terminus, the 497-residue chain is L-arabinose isomerase (497 aa).

Mn(2+) is bound by residues Glu306, Glu331, His348, and His447.

The protein belongs to the arabinose isomerase family. The cofactor is Mn(2+).

It carries out the reaction beta-L-arabinopyranose = L-ribulose. Its pathway is carbohydrate degradation; L-arabinose degradation via L-ribulose; D-xylulose 5-phosphate from L-arabinose (bacterial route): step 1/3. Functionally, catalyzes the conversion of L-arabinose to L-ribulose. The protein is L-arabinose isomerase of Halalkalibacterium halodurans (strain ATCC BAA-125 / DSM 18197 / FERM 7344 / JCM 9153 / C-125) (Bacillus halodurans).